Here is a 618-residue protein sequence, read N- to C-terminus: MSKNSGLPSFASTEADNSQGFVLSVSGPVVIANQLAGAAMYELVRVGHNQLVGEIIRLEEDTATIQVYEETSGLTVGDPVLRTHKPLTVELGPGIMNNIFDGIQRPLNAIAEITKGIYIPRGINTPSLNRTIKWPYQPDTKLKVGDNVSGGDIFGQVVENNLIIHKIMVPPKEMGTIVEIAPAGEYTLDHALLTIEFDGKRKQLTMVHNWPVRSARPVIEKLPCNYPLLTGQRVLDSLFPCVQGGTCAIPGAFGCGKTVISQSLSKFSNSDAIVYVGCGERGNEMAEVLMEFPELHTKVGDKEEPIMQRTCLVANTSNMPVAAREASIYTGITLAEYFRDMGLNVAMMADSTSRWAEALREISGRLAEMPADSGYPAYLGARLASFYERAGRVSCIGHPTRIGSVTIVGAVSPPGGDFADPVTAATLGIVQVFWGLDKKLAQRKHFPSINWLISFSKYMQALDTHYDQMDPEFVPLRTRAKEILQMEEDLSEIVQLVGQDSLGESEKITIEVARIIRDDFLQQNGFSPYDKCCPFFKTVWMLKNMMTFYNLAQKAVESSTADNKVTWNQIKNELKEIIHRITSMKFQDPTDGEQTLTAHFSTLNEDIITAFRNFSDLV.

Residue 251 to 258 coordinates ATP; the sequence is GAFGCGKT.

The protein belongs to the ATPase alpha/beta chains family. In terms of assembly, V-ATPase is a heteromultimeric enzyme composed of a peripheral catalytic V1 complex (main components: subunits A, B, C, D, E, and F) attached to an integral membrane V0 proton pore complex (main component: the proteolipid protein).

It carries out the reaction ATP + H2O + 4 H(+)(in) = ADP + phosphate + 5 H(+)(out). Its function is as follows. Catalytic subunit of the peripheral V1 complex of vacuolar ATPase. V-ATPase vacuolar ATPase is responsible for acidifying a variety of intracellular compartments in eukaryotic cells. In Dictyostelium discoideum (Social amoeba), this protein is V-type proton ATPase catalytic subunit A (vatA).